We begin with the raw amino-acid sequence, 383 residues long: Acetylornithine deacetylase (383 aa).

Residue His-80 coordinates Zn(2+). Asp-82 is an active-site residue. Residue Asp-112 coordinates Zn(2+). The active site involves Glu-144. Zn(2+) is bound by residues Glu-145, Glu-169, and His-355.

It belongs to the peptidase M20A family. ArgE subfamily. In terms of assembly, homodimer. Zn(2+) is required as a cofactor. Co(2+) serves as cofactor. It depends on glutathione as a cofactor.

It is found in the cytoplasm. The enzyme catalyses N(2)-acetyl-L-ornithine + H2O = L-ornithine + acetate. It participates in amino-acid biosynthesis; L-arginine biosynthesis; L-ornithine from N(2)-acetyl-L-ornithine (linear): step 1/1. Functionally, catalyzes the hydrolysis of the amide bond of N(2)-acetylated L-amino acids. Cleaves the acetyl group from N-acetyl-L-ornithine to form L-ornithine, an intermediate in L-arginine biosynthesis pathway, and a branchpoint in the synthesis of polyamines. In Edwardsiella ictaluri (strain 93-146), this protein is Acetylornithine deacetylase.